Reading from the N-terminus, the 1072-residue chain is Carbamoyl phosphate synthase large chain (1072 aa).

The tract at residues 1–401 is carboxyphosphate synthetic domain; sequence MPKRLDINTI…SLLKAVRSLE (401 aa). The ATP site is built by arginine 129, arginine 169, glycine 175, glycine 176, lysine 208, isoleucine 210, glutamate 215, glycine 241, valine 242, histidine 243, glutamine 284, and glutamate 298. The 195-residue stretch at 133–327 folds into the ATP-grasp 1 domain; sequence RTLMQDLNEP…IAKLAAKIAV (195 aa). Mg(2+) contacts are provided by glutamine 284, glutamate 298, and asparagine 300. Residues glutamine 284, glutamate 298, and asparagine 300 each coordinate Mn(2+). The oligomerization domain stretch occupies residues 402 to 546; it reads LGIYHLELDH…YSTYADENES (145 aa). The interval 547–929 is carbamoyl phosphate synthetic domain; that stretch reads IVTDRKSVVV…ALYKGLVASG (383 aa). The ATP-grasp 2 domain occupies 671-861; it reads EAALTKLGIP…MANVATKVIL (191 aa). ATP is bound by residues arginine 707, arginine 746, glutamate 752, glycine 777, valine 778, histidine 779, serine 780, glutamine 820, and glutamate 832. Positions 820, 832, and 834 each coordinate Mg(2+). Residues glutamine 820, glutamate 832, and asparagine 834 each contribute to the Mn(2+) site. The 143-residue stretch at 930–1072 folds into the MGS-like domain; that stretch reads INIPTHGSVI…QTKRHEVVHA (143 aa). Residues 930 to 1072 are allosteric domain; the sequence is INIPTHGSVI…QTKRHEVVHA (143 aa).

The protein belongs to the CarB family. In terms of assembly, composed of two chains; the small (or glutamine) chain promotes the hydrolysis of glutamine to ammonia, which is used by the large (or ammonia) chain to synthesize carbamoyl phosphate. Tetramer of heterodimers (alpha,beta)4. The cofactor is Mg(2+). Mn(2+) serves as cofactor.

It catalyses the reaction hydrogencarbonate + L-glutamine + 2 ATP + H2O = carbamoyl phosphate + L-glutamate + 2 ADP + phosphate + 2 H(+). The enzyme catalyses hydrogencarbonate + NH4(+) + 2 ATP = carbamoyl phosphate + 2 ADP + phosphate + 2 H(+). It functions in the pathway amino-acid biosynthesis; L-arginine biosynthesis; carbamoyl phosphate from bicarbonate: step 1/1. Its pathway is pyrimidine metabolism; UMP biosynthesis via de novo pathway; (S)-dihydroorotate from bicarbonate: step 1/3. Functionally, large subunit of the glutamine-dependent carbamoyl phosphate synthetase (CPSase). CPSase catalyzes the formation of carbamoyl phosphate from the ammonia moiety of glutamine, carbonate, and phosphate donated by ATP, constituting the first step of 2 biosynthetic pathways, one leading to arginine and/or urea and the other to pyrimidine nucleotides. The large subunit (synthetase) binds the substrates ammonia (free or transferred from glutamine from the small subunit), hydrogencarbonate and ATP and carries out an ATP-coupled ligase reaction, activating hydrogencarbonate by forming carboxy phosphate which reacts with ammonia to form carbamoyl phosphate. The polypeptide is Carbamoyl phosphate synthase large chain (Bacillus cereus (strain ATCC 14579 / DSM 31 / CCUG 7414 / JCM 2152 / NBRC 15305 / NCIMB 9373 / NCTC 2599 / NRRL B-3711)).